The primary structure comprises 208 residues: Protein disulfide-isomerase A3 (208 aa).

The 44-residue stretch at 1 to 44 (RLAPEYEAAATRYGVSGYPTLKDGEEAGAYDGPRTADGIVSHLK) folds into the Thioredoxin 1 domain. At lysine 44 the chain carries N6-succinyllysine. Residue lysine 49 is modified to N6-acetyllysine. Position 133 is a phosphothreonine (threonine 133). The Thioredoxin 2 domain maps to 151–208 (SRFLQDYFDGNLKRYLKSEPIPETNDGPVKMDATANDVPSPYEVKGFPTIYFSPANKK). Residue lysine 163 is modified to N6-acetyllysine.

Belongs to the protein disulfide isomerase family. As to quaternary structure, part of the major histocompatibility complex class I (MHC I) peptide loading complex composed of TAP1, TAP2, B2M, MHC heavy chain, TAPBP, PDIA3, and CALR. Interacts with ERP27 and CANX. Interacts with SERPINA2 and SERPINA1. Interacts with ATP2A2. In terms of processing, within the major histocompatibility complex class I (MHC I) peptide loading complex forms reversible disulfide-linked heterodimers with TAPBP as part of its protein folding chaperone activity. This is essential to assist the dynamic assembly of the MHC I complex with high affinity antigens in the endoplasmic reticulum. Post-translationally, phosphorylated. In terms of tissue distribution, in the caput epididymal spermatozoa, detected in the mid-peice and at low levels in the principal piece. In the cauda epididymal spermatozoa, detected at very low levels in the principal piece and not in the mid-piece (at protein level).

Its subcellular location is the endoplasmic reticulum. It localises to the endoplasmic reticulum lumen. The protein localises to the melanosome. The catalysed reaction is Catalyzes the rearrangement of -S-S- bonds in proteins.. In terms of biological role, protein disulfide isomerase that catalyzes the formation, isomerization, and reduction or oxidation of disulfide bonds in client proteins and functions as a protein folding chaperone. Core component of the major histocompatibility complex class I (MHC I) peptide loading complex where it functions as an essential folding chaperone for TAPBP. Through TAPBP, assists the dynamic assembly of the MHC I complex with high affinity antigens in the endoplasmic reticulum. Therefore, plays a crucial role in the presentation of antigens to cytotoxic T cells in adaptive immunity. The sequence is that of Protein disulfide-isomerase A3 from Mesocricetus auratus (Golden hamster).